A 117-amino-acid polypeptide reads, in one-letter code: Hydrogenase maturation factor HypA (117 aa).

A Ni(2+)-binding site is contributed by His-2. The Zn(2+) site is built by Cys-73, Cys-76, Cys-89, and Cys-92.

Belongs to the HypA/HybF family.

Involved in the maturation of [NiFe] hydrogenases. Required for nickel insertion into the metal center of the hydrogenase. This Shewanella baltica (strain OS223) protein is Hydrogenase maturation factor HypA.